Here is a 287-residue protein sequence, read N- to C-terminus: Polyamine aminopropyltransferase (287 aa).

The region spanning 5 to 238 (EIWYETLHAN…GIMTFAWASN (234 aa)) is the PABS domain. Q33 is a binding site for S-methyl-5'-thioadenosine. H64 and D88 together coordinate spermidine. S-methyl-5'-thioadenosine contacts are provided by residues E108 and 140-141 (DG). D158 functions as the Proton acceptor in the catalytic mechanism. Residue 158 to 161 (DCTD) coordinates spermidine. P165 contributes to the S-methyl-5'-thioadenosine binding site.

This sequence belongs to the spermidine/spermine synthase family. As to quaternary structure, homodimer or homotetramer.

It is found in the cytoplasm. It carries out the reaction S-adenosyl 3-(methylsulfanyl)propylamine + putrescine = S-methyl-5'-thioadenosine + spermidine + H(+). The protein operates within amine and polyamine biosynthesis; spermidine biosynthesis; spermidine from putrescine: step 1/1. In terms of biological role, catalyzes the irreversible transfer of a propylamine group from the amino donor S-adenosylmethioninamine (decarboxy-AdoMet) to putrescine (1,4-diaminobutane) to yield spermidine. The polypeptide is Polyamine aminopropyltransferase (Pectobacterium carotovorum subsp. carotovorum (strain PC1)).